The following is a 403-amino-acid chain: RILP-like protein 1 (403 aa).

Phosphoserine is present on Ser7. Residues 10 to 97 (AAESALEKNV…RLERMDRIEK (88 aa)) enclose the RH1 domain. Cys47 carries the post-translational modification S-nitrosocysteine. Residues 76–258 (ELDELRLELD…KLRERLQGEH (183 aa)) are a coiled coil. Disordered regions lie at residues 254–275 (LQGE…GEES), 327–352 (EMEE…PESG), and 384–403 (ANTH…LQHL). Ser259 carries the post-translational modification Phosphoserine. Positions 262–275 (GEEEPETEPVGEES) are enriched in acidic residues. The RH2 domain occupies 291 to 356 (RPRFTLQELR…PQPESGIKRL (66 aa)). Residues 394–403 (EQGQEALQHL) show a composition bias toward polar residues.

Belongs to the RILPL family. As to quaternary structure, interacts (when S-nitrosylated) with GAPDH. Interacts with RAB8A; interaction is dependent on the phosphorylation of 'Thr-72' of RAB8A. Interacts with RAB10 and RAB12; the interaction is dependent on the phosphorylation of 'Thr-73' of RAB10, and 'Ser-105' of RAB12. In terms of processing, S-nitrosylation is required for the interaction with GAPDH. Widely expressed. Expressed at lower level in liver and kidney.

It localises to the cytoplasm. The protein resides in the cytosol. The protein localises to the cytoskeleton. Its subcellular location is the microtubule organizing center. It is found in the centrosome. It localises to the centriole. The protein resides in the cilium basal body. Its function is as follows. Plays a role in the regulation of cell shape and polarity. Plays a role in cellular protein transport, including protein transport away from primary cilia. Neuroprotective protein, which acts by sequestring GAPDH in the cytosol and prevent the apoptotic function of GAPDH in the nucleus. Competes with SIAH1 for binding GAPDH. Does not regulate lysosomal morphology and distribution. Binds to RAB10 following LRRK2-mediated RAB10 phosphorylation which leads to inhibition of ciliogenesis. In Homo sapiens (Human), this protein is RILP-like protein 1 (RILPL1).